The sequence spans 78 residues: Conotoxin Cal6.3a (78 aa).

The N-terminal stretch at 1–21 (MRFLHFLIVAVLLASFMESGA) is a signal peptide. Positions 22 to 26 (MPRNP) are excised as a propeptide. 3 disulfide bridges follow: Cys-38–Cys-49, Cys-41–Cys-53, and Cys-48–Cys-56. The residue at position 76 (Gln-76) is a Glutamine amide.

Expressed by the venom duct.

It localises to the secreted. In terms of biological role, probable neurotoxin with unknown target. Possibly targets ion channels. This chain is Conotoxin Cal6.3a, found in Californiconus californicus (California cone).